The primary structure comprises 196 residues: Holliday junction branch migration complex subunit RuvA (196 aa).

Residues 1-63 (MYDYIKGKLS…DDAHLLFGFH (63 aa)) form a domain I region. Residues 64 to 142 (TENEKEIFLN…EASGESATSR (79 aa)) form a domain II region. The interval 143 to 148 (KVSSEQ) is flexible linker. The segment at 148-196 (QNSNLEEAMEALLALGYKATELKKVKAFFEGTNETVEQYIKSSLKMLMK) is domain III.

It belongs to the RuvA family. Homotetramer. Forms an RuvA(8)-RuvB(12)-Holliday junction (HJ) complex. HJ DNA is sandwiched between 2 RuvA tetramers; dsDNA enters through RuvA and exits via RuvB. An RuvB hexamer assembles on each DNA strand where it exits the tetramer. Each RuvB hexamer is contacted by two RuvA subunits (via domain III) on 2 adjacent RuvB subunits; this complex drives branch migration. In the full resolvosome a probable DNA-RuvA(4)-RuvB(12)-RuvC(2) complex forms which resolves the HJ.

Its subcellular location is the cytoplasm. In terms of biological role, the RuvA-RuvB-RuvC complex processes Holliday junction (HJ) DNA during genetic recombination and DNA repair, while the RuvA-RuvB complex plays an important role in the rescue of blocked DNA replication forks via replication fork reversal (RFR). RuvA specifically binds to HJ cruciform DNA, conferring on it an open structure. The RuvB hexamer acts as an ATP-dependent pump, pulling dsDNA into and through the RuvAB complex. HJ branch migration allows RuvC to scan DNA until it finds its consensus sequence, where it cleaves and resolves the cruciform DNA. This chain is Holliday junction branch migration complex subunit RuvA, found in Streptococcus agalactiae serotype Ia (strain ATCC 27591 / A909 / CDC SS700).